The primary structure comprises 330 residues: MSAARGGRAGAVVTGVGTCLPETVVDNDEVSRHLDTDHAWIHSRTGIERRRRVSPGTTTGDLAVTAGAAALKSAGRDDCDLVLLATTTPDRRCPATAPRVASRLGLRAAAAFDLSAVCSGFVYGLSVASAMITAGTCDRALVIGADVYSSIVDPDDRGTAVVFGDGAGAVLLERGDTGDPGAVLHTELGSDGTGDELITIPPDGAYLTMRGSDVYTRAVTTMAESARSTAAHAGWDLADVDAFVGHQANLRILTSVAKRLRLPPERVVSNIADVANTAAASIPLALADAAAQGRIGSGDRLLLTAFGGGLTWGSAAVVWSGAEPVQDQRS.

Active-site residues include C118 and H246. Residues 247 to 251 (QANLR) form an ACP-binding region. The active site involves N276.

Belongs to the thiolase-like superfamily. FabH family. In terms of assembly, homodimer.

It localises to the cytoplasm. The catalysed reaction is malonyl-[ACP] + acetyl-CoA + H(+) = 3-oxobutanoyl-[ACP] + CO2 + CoA. The protein operates within lipid metabolism; fatty acid biosynthesis. Catalyzes the condensation reaction of fatty acid synthesis by the addition to an acyl acceptor of two carbons from malonyl-ACP. Catalyzes the first condensation reaction which initiates fatty acid synthesis and may therefore play a role in governing the total rate of fatty acid production. Possesses both acetoacetyl-ACP synthase and acetyl transacylase activities. Its substrate specificity determines the biosynthesis of branched-chain and/or straight-chain of fatty acids. The chain is Beta-ketoacyl-[acyl-carrier-protein] synthase III 2 from Streptomyces coelicolor (strain ATCC BAA-471 / A3(2) / M145).